We begin with the raw amino-acid sequence, 249 residues long: Glucosamine-6-phosphate deaminase (249 aa).

The Proton acceptor; for enolization step role is filled by aspartate 67. The active-site For ring-opening step is the asparagine 136. Histidine 138 acts as the Proton acceptor; for ring-opening step in catalysis. Glutamate 143 functions as the For ring-opening step in the catalytic mechanism.

The protein belongs to the glucosamine/galactosamine-6-phosphate isomerase family. NagB subfamily.

It catalyses the reaction alpha-D-glucosamine 6-phosphate + H2O = beta-D-fructose 6-phosphate + NH4(+). The protein operates within amino-sugar metabolism; N-acetylneuraminate degradation; D-fructose 6-phosphate from N-acetylneuraminate: step 5/5. Its function is as follows. Catalyzes the reversible isomerization-deamination of glucosamine 6-phosphate (GlcN6P) to form fructose 6-phosphate (Fru6P) and ammonium ion. This chain is Glucosamine-6-phosphate deaminase, found in Clostridium botulinum (strain Alaska E43 / Type E3).